Here is a 443-residue protein sequence, read N- to C-terminus: Serine/threonine-protein kinase SSN3 (443 aa).

Positions 1–24 (MERKRGREMNPPSADPPSATPVAR) are disordered. Residues 54 to 384 (YKIVGFISSG…AEKALEHRYF (331 aa)) enclose the Protein kinase domain. Residues 60-68 (ISSGTYGRV) and lysine 84 each bind ATP. Aspartate 185 (proton acceptor) is an active-site residue. The segment at 405 to 443 (RRVSQEDNDIRTSSLPGTKRSGLPDDSLMGRPAKRLKEG) is disordered.

It belongs to the protein kinase superfamily. CMGC Ser/Thr protein kinase family. CDC2/CDKX subfamily. As to quaternary structure, component of the srb8-11 complex, a regulatory module of the Mediator complex. Mg(2+) is required as a cofactor.

Its subcellular location is the nucleus. It carries out the reaction L-seryl-[protein] + ATP = O-phospho-L-seryl-[protein] + ADP + H(+). The catalysed reaction is L-threonyl-[protein] + ATP = O-phospho-L-threonyl-[protein] + ADP + H(+). It catalyses the reaction [DNA-directed RNA polymerase] + ATP = phospho-[DNA-directed RNA polymerase] + ADP + H(+). Component of the srb8-11 complex. The srb8-11 complex is a regulatory module of the Mediator complex which is itself dependent transcription. The srb8-11 complex may be involved in the transcriptional repression of a subset of genes regulated by Mediator. It may inhibit the association of the Mediator complex with RNA polymerase II to form the holoenzyme complex. The srb8-11 complex phosphorylates the C-terminal domain (CTD) of the largest subunit of RNA polymerase II. The protein is Serine/threonine-protein kinase SSN3 (SSN3) of Phaeosphaeria nodorum (strain SN15 / ATCC MYA-4574 / FGSC 10173) (Glume blotch fungus).